The primary structure comprises 136 residues: Ig heavy chain V region BCL1 (136 aa).

The signal sequence occupies residues 1 to 19 (MGWSCIIFFLVATATGVHS). The Ig-like domain occupies 20 to 135 (QVQLQQSGPE…WGQGTTLTVS (116 aa)).

This chain is Ig heavy chain V region BCL1, found in Mus musculus (Mouse).